We begin with the raw amino-acid sequence, 176 residues long: ATP-dependent protease subunit HslV (176 aa).

The active site involves threonine 2. 3 residues coordinate Na(+): serine 157, cysteine 160, and threonine 163.

It belongs to the peptidase T1B family. HslV subfamily. As to quaternary structure, a double ring-shaped homohexamer of HslV is capped on each side by a ring-shaped HslU homohexamer. The assembly of the HslU/HslV complex is dependent on binding of ATP.

The protein localises to the cytoplasm. The catalysed reaction is ATP-dependent cleavage of peptide bonds with broad specificity.. With respect to regulation, allosterically activated by HslU binding. Its function is as follows. Protease subunit of a proteasome-like degradation complex believed to be a general protein degrading machinery. The sequence is that of ATP-dependent protease subunit HslV from Buchnera aphidicola subsp. Baizongia pistaciae (strain Bp).